A 422-amino-acid polypeptide reads, in one-letter code: Phosphoribosylamine--glycine ligase (422 aa).

Positions 107–312 (KEVMAAAGVR…LGQLLYAAGT (206 aa)) constitute an ATP-grasp domain. 138-193 (PPVGDLSWVVKDDRLAAGKGVVVTSDRDVARTHAAGLLEAGHPVLLESYLDGPEVS) serves as a coordination point for ATP. 2 residues coordinate Mg(2+): E282 and N284.

The protein belongs to the GARS family. Mg(2+) serves as cofactor. Requires Mn(2+) as cofactor.

The enzyme catalyses 5-phospho-beta-D-ribosylamine + glycine + ATP = N(1)-(5-phospho-beta-D-ribosyl)glycinamide + ADP + phosphate + H(+). Its pathway is purine metabolism; IMP biosynthesis via de novo pathway; N(1)-(5-phospho-D-ribosyl)glycinamide from 5-phospho-alpha-D-ribose 1-diphosphate: step 2/2. This is Phosphoribosylamine--glycine ligase from Mycobacterium leprae (strain TN).